Consider the following 96-residue polypeptide: Protein RnfH (96 aa).

The protein belongs to the UPF0125 (RnfH) family.

The protein is Protein RnfH of Salmonella agona (strain SL483).